Here is a 245-residue protein sequence, read N- to C-terminus: Adapter protein MecA (245 aa).

This sequence belongs to the MecA family. Homodimer.

Its function is as follows. Enables the recognition and targeting of unfolded and aggregated proteins to the ClpC protease or to other proteins involved in proteolysis. The chain is Adapter protein MecA from Streptococcus pneumoniae (strain ATCC BAA-255 / R6).